The chain runs to 226 residues: Leucyl/phenylalanyl-tRNA--protein transferase (226 aa).

It belongs to the L/F-transferase family.

It is found in the cytoplasm. The enzyme catalyses N-terminal L-lysyl-[protein] + L-leucyl-tRNA(Leu) = N-terminal L-leucyl-L-lysyl-[protein] + tRNA(Leu) + H(+). It carries out the reaction N-terminal L-arginyl-[protein] + L-leucyl-tRNA(Leu) = N-terminal L-leucyl-L-arginyl-[protein] + tRNA(Leu) + H(+). It catalyses the reaction L-phenylalanyl-tRNA(Phe) + an N-terminal L-alpha-aminoacyl-[protein] = an N-terminal L-phenylalanyl-L-alpha-aminoacyl-[protein] + tRNA(Phe). Its function is as follows. Functions in the N-end rule pathway of protein degradation where it conjugates Leu, Phe and, less efficiently, Met from aminoacyl-tRNAs to the N-termini of proteins containing an N-terminal arginine or lysine. The protein is Leucyl/phenylalanyl-tRNA--protein transferase of Stutzerimonas stutzeri (strain A1501) (Pseudomonas stutzeri).